The sequence spans 227 residues: MDSVMRKSLFLLLPLVVTNAHAVYVDVRHEYLDDSKANYDRAYISHRFANGVGFAIEAISKSGGDDTNKAFNDLETQGNEYTISYQFKTGDVAWQPGFVLETGNGYSTYKPYFRATWTLNESWWVGARYRFEYVRRSSDIRDDDTINRMDVWAGYKWNNFDWTIEGIYKKADKYDLYDGGKDNYEYNFRTAYIIDQWSPFVEVGNVSVNSNSDERQTRFRVGIGYTF.

Residues 1–22 (MDSVMRKSLFLLLPLVVTNAHA) form the signal peptide.

This is an uncharacterized protein from Salmonella typhi.